Consider the following 166-residue polypeptide: Protein-export protein SecB (166 aa).

This sequence belongs to the SecB family. In terms of assembly, homotetramer, a dimer of dimers. One homotetramer interacts with 1 SecA dimer.

Its subcellular location is the cytoplasm. One of the proteins required for the normal export of preproteins out of the cell cytoplasm. It is a molecular chaperone that binds to a subset of precursor proteins, maintaining them in a translocation-competent state. It also specifically binds to its receptor SecA. The protein is Protein-export protein SecB of Actinobacillus pleuropneumoniae serotype 7 (strain AP76).